The following is a 303-amino-acid chain: Mitochondrial carrier homolog 2 (303 aa).

Ala2 is modified (N-acetylalanine). Residues 2 to 15 (ADAASQVLLGSGLT) lie on the Mitochondrial intermembrane side of the membrane. 2 Solcar repeats span residues 2–98 (ADAA…YQES) and 118–206 (DRVI…INTY). The helical transmembrane segment at 16–36 (ILSQPLMYVKVLIQVGYEPLP) threads the bilayer. At 37-77 (PTIGRNIFGRQVCQLPGLFCYAQHIASIDGRRGLFTGLTPR) the chain is on the cytoplasmic side. The helical transmembrane segment at 78–92 (LCSGVLGTVVHGKVL) threads the bilayer. Residues 93–135 (QYYQESEKPEELGSVTVQKEYSSSFDRVIKETTREMIARSAAT) lie on the Mitochondrial intermembrane side of the membrane. A helical transmembrane segment spans residues 136–156 (LITHPFHVITLRSMVQFIGRE). At 157–180 (SKYCGLCDSIVTIYREEGIVGFFA) the chain is on the cytoplasmic side. Residues 181–199 (GLIPRLLGDIISLWLCNSL) traverse the membrane as a helical segment. The Mitochondrial intermembrane segment spans residues 200 to 231 (AYLINTYALDSGVSTMNEMKSYSQAVTGFFAS). A helical transmembrane segment spans residues 232–252 (MLTYPFVLVSNLMAVNNCGLA). The Cytoplasmic segment spans residues 253 to 280 (GGSPPYSPIYTSWIDCWCMLQKAGNMSR). A helical transmembrane segment spans residues 281-303 (GNSLFFRKVPCGKTYCYDLRMLI).

The protein belongs to the mitochondrial carrier (TC 2.A.29) family. In terms of assembly, interacts with p15BID. As to expression, expressed in a wide variety of tissues. Predominant expressed in liver, kidney, heart, skeletal muscle and testis.

The protein resides in the mitochondrion outer membrane. Functionally, protein insertase that mediates insertion of transmembrane proteins into the mitochondrial outer membrane. Catalyzes insertion of proteins with alpha-helical transmembrane regions, such as signal-anchored, tail-anchored and multi-pass membrane proteins. Does not mediate insertion of beta-barrel transmembrane proteins. Also acts as a receptor for the truncated form of pro-apoptotic BH3-interacting domain death agonist (p15 BID) and has therefore a critical function in apoptosis. Regulates the quiescence/cycling of hematopoietic stem cells (HSCs). Acts as a regulator of mitochondrial fusion, essential for the naive-to-primed interconversion of embryonic stem cells (ESCs). Acts as a regulator of lipid homeostasis and has a regulatory role in adipocyte differentiation and biology. The polypeptide is Mitochondrial carrier homolog 2 (Mus musculus (Mouse)).